Consider the following 233-residue polypeptide: U2 small nuclear ribonucleoprotein A' (233 aa).

4 LRR repeats span residues 20–40 (KLTLLLRDLQITELENLAITQ), 42–63 (KYQVIDLSNNDLISLGNIPKRF), 65–86 (NLQCLLLSNNNISYIDDESFPS), and 89–110 (HITSITLFNNNIYQFQKSFKDK). One can recognise an LRRCT domain in the interval 122–160 (NPITEMENYRYFIIWLIPSLKVLDFKKVKQAERKTSEDM).

The protein belongs to the U2 small nuclear ribonucleoprotein A family. As to quaternary structure, associated with the spliceosome.

It is found in the nucleus. Functionally, involved in pre-mRNA splicing. The chain is U2 small nuclear ribonucleoprotein A' (LEA1) from Candida albicans (strain SC5314 / ATCC MYA-2876) (Yeast).